The sequence spans 304 residues: Chromo domain-containing protein cec-1 (304 aa).

Residues Y8–K66 enclose the Chromo domain. Residues A63–A73 show a composition bias toward basic and acidic residues. Disordered regions lie at residues A63 to L235 and V248 to E304. Positions G75–A102 are enriched in low complexity. Residues P106 to R116 are compositionally biased toward basic residues. Positions I122 to A141 are enriched in basic and acidic residues. Composition is skewed to acidic residues over residues E142 to E152, E163 to L204, and E212 to I233. Residues V248 to V292 show a composition bias toward low complexity. Positions T293 to E304 are enriched in acidic residues.

It is found in the nucleus. It localises to the chromosome. The polypeptide is Chromo domain-containing protein cec-1 (cec-1) (Caenorhabditis elegans).